A 369-amino-acid chain; its full sequence is tRNA pseudouridine synthase D (369 aa).

The active-site Nucleophile is D80. Residues 156-318 (GIPNWFGEQR…LKQERRALRL (163 aa)) enclose the TRUD domain.

The protein belongs to the pseudouridine synthase TruD family.

It carries out the reaction uridine(13) in tRNA = pseudouridine(13) in tRNA. In terms of biological role, responsible for synthesis of pseudouridine from uracil-13 in transfer RNAs. The polypeptide is tRNA pseudouridine synthase D (Xanthomonas euvesicatoria pv. vesicatoria (strain 85-10) (Xanthomonas campestris pv. vesicatoria)).